The chain runs to 307 residues: Membrane protein insertase YidC 2 (307 aa).

The N-terminal stretch at 1 to 23 (MKLTLNRILFSGLALSILFTLTG) is a signal peptide. Cys24 carries N-palmitoyl cysteine lipidation. Cys24 carries S-diacylglycerol cysteine lipidation. 5 helical membrane-spanning segments follow: residues 58 to 78 (LGYG…ILPL), 135 to 155 (LGGI…AMYF), 179 to 199 (VLTA…MMAV), 209 to 225 (TMMY…SFSL), and 231 to 251 (LYWL…TYLL). The interval 263–307 (YAKNPPKAYQSTSSRKDVTPSQNMEQANLPKKIKSNRNAGKQRKR) is disordered. The span at 271-288 (YQSTSSRKDVTPSQNMEQ) shows a compositional bias: polar residues. The span at 293–307 (KKIKSNRNAGKQRKR) shows a compositional bias: basic residues.

Belongs to the OXA1/ALB3/YidC family. Type 2 subfamily.

It is found in the cell membrane. Required for the insertion and/or proper folding and/or complex formation of integral membrane proteins into the membrane. Involved in integration of membrane proteins that insert both dependently and independently of the Sec translocase complex, as well as at least some lipoproteins. The polypeptide is Membrane protein insertase YidC 2 (Streptococcus pyogenes serotype M3 (strain ATCC BAA-595 / MGAS315)).